The sequence spans 778 residues: Melanoma-associated antigen D1 (778 aa).

Disordered stretches follow at residues 41–60, 78–123, and 182–333; these read PTNQATAAASPQSSQPPTAN, FKVQ…KGPN, and KAWN…PAWQ. The residue at position 92 (Y92) is a Phosphotyrosine. Polar residues-rich tracts occupy residues 104–118, 185–211, 225–240, 253–263, and 300–319; these read PNTQPKAAFKSQNAT, NDTTKAPTADTQTQNVNQAKMATSQAD, TAQTSADGSQAQNLES, NNLNVEENSSG, and LAWQNPSGWQNQTARQTPPA. Repeat copies occupy residues 296–301, 302–307, 308–313, 332–337, 338–343, 344–349, 350–355, 356–361, 362–367, 368–373, 374–379, 380–385, 386–391, 392–397, 398–403, 404–409, 410–415, 416–421, and 422–427. The 22 X 6 AA tandem repeats of W-[PQ]-X-P-X-X stretch occupies residues 296 to 444; sequence WQTPLAWQNP…IPPDWQNLRP (149 aa). Positions 376–412 are disordered; that stretch reads NPPGWQTPPGWQTPPGWQGPPDWQGPPDWPLPPDWPL. Positions 377-397 are enriched in low complexity; that stretch reads PPGWQTPPGWQTPPGWQGPPD. The segment covering 398–412 has biased composition (pro residues); sequence WQGPPDWPLPPDWPL. One copy of the 20; approximate repeat lies at 428-432; the sequence is WIPAD. Repeat copies occupy residues 433-438 and 439-444. Residues 440-455 show a composition bias toward low complexity; that stretch reads QNLRPSPNLRPSPNSR. The interval 440 to 466 is disordered; it reads QNLRPSPNLRPSPNSRASQNPGAAQPR. Residues 471-669 enclose the MAGE domain; that stretch reads LQERANKLVK…RDWTAQFMEA (199 aa).

In terms of assembly, interacts with DLX5, DLX7 and MSX2 and forms homomultimers. Interacts with UNC5A. Interacts with TRIM28 and PJA1. Interacts with NGFR/p75NTR and RORA. As to expression, expressed in bone marrow stromal cells from both multiple myeloma patients and healthy donors. Seems to be ubiquitously expressed.

The protein localises to the cytoplasm. Its subcellular location is the cell membrane. It is found in the nucleus. Its function is as follows. Involved in the apoptotic response after nerve growth factor (NGF) binding in neuronal cells. Inhibits cell cycle progression, and facilitates NGFR-mediated apoptosis. May act as a regulator of the function of DLX family members. May enhance ubiquitin ligase activity of RING-type zinc finger-containing E3 ubiquitin-protein ligases. Proposed to act through recruitment and/or stabilization of the Ubl-conjugating enzyme (E2) at the E3:substrate complex. Plays a role in the circadian rhythm regulation. May act as RORA co-regulator, modulating the expression of core clock genes such as BMAL1 and NFIL3, induced, or NR1D1, repressed. This Homo sapiens (Human) protein is Melanoma-associated antigen D1 (MAGED1).